We begin with the raw amino-acid sequence, 55 residues long: Ferredoxin (55 aa).

4Fe-4S ferredoxin-type domains follow at residues 2-26 and 27-55; these read YKIT…ISEG and SIYE…VPED. [4Fe-4S] cluster-binding residues include Cys-8, Cys-11, Cys-14, Cys-18, Cys-36, Cys-39, Cys-42, and Cys-46.

Requires [4Fe-4S] cluster as cofactor.

Functionally, ferredoxins are iron-sulfur proteins that transfer electrons in a wide variety of metabolic reactions. The protein is Ferredoxin of Butyribacterium methylotrophicum.